Consider the following 425-residue polypeptide: Adenylosuccinate synthetase (425 aa).

Residues 12–18 (GDEGKGK) and 40–42 (GHT) contribute to the GTP site. Asp13 functions as the Proton acceptor in the catalytic mechanism. Residues Asp13 and Gly40 each contribute to the Mg(2+) site. IMP is bound by residues 13-16 (DEGK), 38-41 (NAGH), Thr130, Arg144, Gln225, Thr240, and Arg304. The Proton donor role is filled by His41. 300–306 (ATTGRPR) is a binding site for substrate. GTP-binding positions include Arg306, 332 to 334 (KLD), and 414 to 416 (SVG).

It belongs to the adenylosuccinate synthetase family. Homodimer. The cofactor is Mg(2+).

It localises to the cytoplasm. It catalyses the reaction IMP + L-aspartate + GTP = N(6)-(1,2-dicarboxyethyl)-AMP + GDP + phosphate + 2 H(+). It participates in purine metabolism; AMP biosynthesis via de novo pathway; AMP from IMP: step 1/2. Functionally, plays an important role in the de novo pathway of purine nucleotide biosynthesis. Catalyzes the first committed step in the biosynthesis of AMP from IMP. The chain is Adenylosuccinate synthetase from Desulfovibrio desulfuricans (strain ATCC 27774 / DSM 6949 / MB).